The chain runs to 316 residues: NADH-cytochrome b5 reductase-like (316 aa).

The Oxidoreductase-like domain occupies 17–53 (KPVEPLPSQCCGSGCSPCVFDLYYRDLERWETARARN). The region spanning 76–178 (ETFLAFHIST…RGPFGSFLYE (103 aa)) is the FAD-binding FR-type domain. FAD is bound by residues 158–173 (ESWR…GPFG) and 183–215 (GELL…TFVT).

Belongs to the flavoprotein pyridine nucleotide cytochrome reductase family. The cofactor is FAD.

The catalysed reaction is 2 Fe(III)-[cytochrome b5] + NADH = 2 Fe(II)-[cytochrome b5] + NAD(+) + H(+). In terms of biological role, NADH-cytochrome b5 reductases are involved in desaturation and elongation of fatty acids, cholesterol biosynthesis, drug metabolism, and, in erythrocyte, methemoglobin reduction. This is NADH-cytochrome b5 reductase-like (Cyb5rl) from Mus musculus (Mouse).